Reading from the N-terminus, the 174-residue chain is MGLVVSAAASCGRLRRSRSRSPPPAVLDPSQSPLSLEREAEPELIRVFRCFDTDGDGLISAAEMREFYGCSVDEAEEMVAAADRDGDGFVSIEELRAVMEGGGLDALRAAFDEYDEDGNGVITAEELRRALRRLNLDGMDLTAEQCAEIVAAVDSDGDGVISFDEFKAMMSKQA.

Gly-2 carries the N-myristoyl glycine lipid modification. Positions 14–35 (LRRSRSRSPPPAVLDPSQSPLS) are disordered. EF-hand domains follow at residues 39–74 (EAEP…SVDE), 75–100 (AEEM…AVME), 102–137 (GGLD…LNLD), and 141–174 (LTAE…SKQA). 16 residues coordinate Ca(2+): Asp-52, Asp-54, Asp-56, Glu-63, Asp-83, Asp-85, Asp-87, Glu-94, Asp-115, Asp-117, Asn-119, Glu-126, Asp-154, Asp-156, Asp-158, and Glu-165.

Its function is as follows. Potential calcium sensor. In Oryza sativa subsp. japonica (Rice), this protein is Probable calcium-binding protein CML20 (CML20).